The chain runs to 195 residues: uncharacterized protein (195 aa).

The next 4 helical transmembrane spans lie at 89–106 (SWISVLLIVTIIALPLLP), 111–128 (HLPLAVYLMVLAGYVWKR), 149–168 (VKISRVGAVYLLFLAVVLLL), and 172–194 (LNALVVLLLIAVSCAAFFLFLNI).

Its subcellular location is the cell membrane. This is an uncharacterized protein from Bacillus subtilis (strain 168).